Reading from the N-terminus, the 174-residue chain is MQELKTLLDELKSQSFFNENEICVIGCSTSEVIGQKIGSVGSMEVAEAIFNALEEVKQDTGVSFAFQGCEHINRAVTIEREDFNPLTMEEVTVVPDVHAGGSLATYAYKHMNDPIVVEHISVPKGIDIGQTLIGMHIKHICVPVRTSVKQVGEAIVTIATSRPKKIGGERAKYE.

It belongs to the UPF0340 family.

The protein is UPF0340 protein SH0921 of Staphylococcus haemolyticus (strain JCSC1435).